Consider the following 343-residue polypeptide: Methylthioribose-1-phosphate isomerase (343 aa).

Substrate contacts are provided by residues 48–50, Arg-88, and Gln-193; that span reads RGA. The active-site Proton donor is the Asp-234. 244 to 245 is a substrate binding site; the sequence is NK.

The protein belongs to the eIF-2B alpha/beta/delta subunits family. MtnA subfamily.

It carries out the reaction 5-(methylsulfanyl)-alpha-D-ribose 1-phosphate = 5-(methylsulfanyl)-D-ribulose 1-phosphate. It participates in amino-acid biosynthesis; L-methionine biosynthesis via salvage pathway; L-methionine from S-methyl-5-thio-alpha-D-ribose 1-phosphate: step 1/6. In terms of biological role, catalyzes the interconversion of methylthioribose-1-phosphate (MTR-1-P) into methylthioribulose-1-phosphate (MTRu-1-P). This Thermotoga petrophila (strain ATCC BAA-488 / DSM 13995 / JCM 10881 / RKU-1) protein is Methylthioribose-1-phosphate isomerase.